A 364-amino-acid chain; its full sequence is Leucine-rich repeat-containing protein 19 (364 aa).

A signal peptide spans 1–20 (MKVTRFMFWLFSMLLPSVKS). Over 21–264 (QASETEVPCN…SEHEPLGKSW (244 aa)) the chain is Extracellular. N-linked (GlcNAc...) asparagine glycosylation is found at Asn30, Asn35, Asn46, and Asn88. 6 LRR repeats span residues 44–69 (STNVTILDLSYNRITLNAADSRVLQM), 70–93 (YSLLTELYLMENNIIALYNSSFRN), 94–117 (LLNLEILNICGNSISVIQQGSFVG), 118–141 (LNELKQLFLCQNKILQLNPDTFVP), 143–163 (NNLKVLNLQGNLIRLFDAPQL), and 164–190 (PHLEILTLDGNPWNCTCGLLELHNWLN). The 52-residue stretch at 174 to 225 (NPWNCTCGLLELHNWLNTSNVTLENENMTMCSYPDELKHDSIKSAPFTTECH) folds into the LRRCT domain. Residues Asn177, Asn190, Asn193, Asn200, Asn241, Asn245, and Asn250 are each glycosylated (N-linked (GlcNAc...) asparagine). The chain crosses the membrane as a helical span at residues 265-285 (AFLVGVVATVLLTSLLIFIAI). Topologically, residues 286–364 (KCPVWYNILL…IDINEVHEEK (79 aa)) are cytoplasmic.

In terms of assembly, interacts with TRAF2 and TRAF6. In terms of tissue distribution, strongly expressed in kidney, also expressed in spleen, intestine and colon. Highly expressed in epithelial cells. In kidney, mainly expressed in renal collecting duct epithelial cells.

It is found in the membrane. With respect to regulation, activated by TLR ligands such as LPS, bacterial DNA and peptidoglycan. In terms of biological role, pathogen-recognition receptor which mediates the activation of TRAF2- and TRAF6 NF-kappa-B signaling pathways and induces the expression of pro-inflammatory cytokines. In kidney, prevents infection by uropathogenic bacteria by inducing the production of cytokines, chemokines and antimicrobial substances. In gut, involved in host-microbiota interactions, plays a critical role in promoting the recruitment of immune cells and intestinal inflammation. This Mus musculus (Mouse) protein is Leucine-rich repeat-containing protein 19.